Consider the following 923-residue polypeptide: DNA gyrase subunit A (923 aa).

The region spanning Leu-34–Leu-534 is the Topo IIA-type catalytic domain. Tyr-122 (O-(5'-phospho-DNA)-tyrosine intermediate) is an active-site residue. The short motif at Gln-561 to Gly-567 is the GyrA-box element. Residues Glu-881–Glu-923 are disordered. Composition is skewed to acidic residues over residues Gly-888–Ala-901 and Ala-908–Glu-923.

This sequence belongs to the type II topoisomerase GyrA/ParC subunit family. As to quaternary structure, heterotetramer, composed of two GyrA and two GyrB chains. In the heterotetramer, GyrA contains the active site tyrosine that forms a transient covalent intermediate with DNA, while GyrB binds cofactors and catalyzes ATP hydrolysis.

It is found in the cytoplasm. It carries out the reaction ATP-dependent breakage, passage and rejoining of double-stranded DNA.. In terms of biological role, a type II topoisomerase that negatively supercoils closed circular double-stranded (ds) DNA in an ATP-dependent manner to modulate DNA topology and maintain chromosomes in an underwound state. Negative supercoiling favors strand separation, and DNA replication, transcription, recombination and repair, all of which involve strand separation. Also able to catalyze the interconversion of other topological isomers of dsDNA rings, including catenanes and knotted rings. Type II topoisomerases break and join 2 DNA strands simultaneously in an ATP-dependent manner. The chain is DNA gyrase subunit A from Pseudomonas aeruginosa (strain ATCC 15692 / DSM 22644 / CIP 104116 / JCM 14847 / LMG 12228 / 1C / PRS 101 / PAO1).